A 296-amino-acid chain; its full sequence is Ribosome biogenesis GTPase A (296 aa).

A CP-type G domain is found at 14–178; the sequence is RRQVTEKLKL…LLDTPGILWP (165 aa). Residues 58–61, 130–135, and Gly-174 each bind GTP; these read NKAD and NVGKST.

This sequence belongs to the TRAFAC class YlqF/YawG GTPase family. MTG1 subfamily. In terms of assembly, interacts with ctc. Interacts with the immature 50S ribosome subunit. 2 molecules of rbgA bind to one 50S subunit.

The protein localises to the cytoplasm. Functionally, essential protein that is required for a late step of 50S ribosomal subunit assembly. Has GTPase activity that is stimulated by interaction with the immature 50S ribosome subunit. Binds to the 23S rRNA. Required for the association of ribosomal proteins rplP and rpmA with the large subunit. The protein is Ribosome biogenesis GTPase A of Bacillus cereus (strain ATCC 14579 / DSM 31 / CCUG 7414 / JCM 2152 / NBRC 15305 / NCIMB 9373 / NCTC 2599 / NRRL B-3711).